The chain runs to 123 residues: Holo-[acyl-carrier-protein] synthase (123 aa).

Mg(2+) is bound by residues Asp-9 and Glu-57.

Belongs to the P-Pant transferase superfamily. AcpS family. Mg(2+) serves as cofactor.

The protein resides in the cytoplasm. The enzyme catalyses apo-[ACP] + CoA = holo-[ACP] + adenosine 3',5'-bisphosphate + H(+). In terms of biological role, transfers the 4'-phosphopantetheine moiety from coenzyme A to a Ser of acyl-carrier-protein. The polypeptide is Holo-[acyl-carrier-protein] synthase (Streptomyces coelicolor (strain ATCC BAA-471 / A3(2) / M145)).